Consider the following 306-residue polypeptide: Acetyl-coenzyme A carboxylase carboxyl transferase subunit beta (306 aa).

Residues 28–297 (LWIKCPDTGQ…TPAGKPSTPV (270 aa)) enclose the CoA carboxyltransferase N-terminal domain. The tract at residues 287 to 306 (QTPAGKPSTPVAPEPVPDAA) is disordered. Residues 296–306 (PVAPEPVPDAA) are compositionally biased toward pro residues.

The protein belongs to the AccD/PCCB family. As to quaternary structure, acetyl-CoA carboxylase is a heterohexamer composed of biotin carboxyl carrier protein (AccB), biotin carboxylase (AccC) and two subunits each of ACCase subunit alpha (AccA) and ACCase subunit beta (AccD).

It is found in the cytoplasm. The enzyme catalyses N(6)-carboxybiotinyl-L-lysyl-[protein] + acetyl-CoA = N(6)-biotinyl-L-lysyl-[protein] + malonyl-CoA. The protein operates within lipid metabolism; malonyl-CoA biosynthesis; malonyl-CoA from acetyl-CoA: step 1/1. Component of the acetyl coenzyme A carboxylase (ACC) complex. Biotin carboxylase (BC) catalyzes the carboxylation of biotin on its carrier protein (BCCP) and then the CO(2) group is transferred by the transcarboxylase to acetyl-CoA to form malonyl-CoA. The polypeptide is Acetyl-coenzyme A carboxylase carboxyl transferase subunit beta (Methylorubrum populi (strain ATCC BAA-705 / NCIMB 13946 / BJ001) (Methylobacterium populi)).